A 331-amino-acid polypeptide reads, in one-letter code: Pyruvate dehydrogenase E1 component subunit beta (331 aa).

Thiamine diphosphate is bound at residue glutamate 60. K(+) is bound by residues leucine 113, alanine 161, isoleucine 162, aspartate 164, and asparagine 166.

As to quaternary structure, heterodimer of an alpha and a beta chain. Thiamine diphosphate serves as cofactor.

Its subcellular location is the plastid. It localises to the chloroplast. The enzyme catalyses N(6)-[(R)-lipoyl]-L-lysyl-[protein] + pyruvate + H(+) = N(6)-[(R)-S(8)-acetyldihydrolipoyl]-L-lysyl-[protein] + CO2. Its function is as follows. The pyruvate dehydrogenase complex catalyzes the overall conversion of pyruvate to acetyl-CoA and CO(2). It contains multiple copies of three enzymatic components: pyruvate dehydrogenase (E1), dihydrolipoamide acetyltransferase (E2) and lipoamide dehydrogenase (E3). The chain is Pyruvate dehydrogenase E1 component subunit beta (pdhB) from Porphyra purpurea (Red seaweed).